Consider the following 159-residue polypeptide: U1 small nuclear ribonucleoprotein C (159 aa).

The Matrin-type zinc-finger motif lies at 4–36 (FYCDYCDTYLTHDSPSVRKTHCSGRKHKENVKD). Y8 is subject to Phosphotyrosine. At S17 the chain carries Phosphoserine. The residue at position 52 (K52) is an N6-acetyllysine. A disordered region spans residues 62–96 (IPPAPFSAPPPAGAMIPPPPSLPGPPRPGMMPAPH). Residues 63 to 92 (PPAPFSAPPPAGAMIPPPPSLPGPPRPGMM) are compositionally biased toward pro residues.

Belongs to the U1 small nuclear ribonucleoprotein C family. In terms of assembly, component of the U1 snRNP. The U1 snRNP is composed of the U1 snRNA and the 7 core Sm proteins SNRPB, SNRPD1, SNRPD2, SNRPD3, SNRPE, SNRPF and SNRPG that assemble in a heptameric protein ring on the Sm site of the small nuclear RNA to form the core snRNP, and at least 3 U1 snRNP-specific proteins SNRNP70/U1-70K, SNRPA/U1-A and SNRPC/U1-C. SNRPC/U1-C interacts with U1 snRNA and the 5' splice-site region of the pre-mRNA. Interacts (via N-terminus) with TIA1 (via C-terminus); thereby promoting spliceosomal U1 snRNP recruitment to 5' splice sites.

It is found in the nucleus. Its function is as follows. Component of the spliceosomal U1 snRNP, which is essential for recognition of the pre-mRNA 5' splice-site and the subsequent assembly of the spliceosome. SNRPC/U1-C is directly involved in initial 5' splice-site recognition for both constitutive and regulated alternative splicing. The interaction with the 5' splice-site seems to precede base-pairing between the pre-mRNA and the U1 snRNA. Stimulates commitment or early (E) complex formation by stabilizing the base pairing of the 5' end of the U1 snRNA and the 5' splice-site region. The chain is U1 small nuclear ribonucleoprotein C from Rattus norvegicus (Rat).